Here is an 897-residue protein sequence, read N- to C-terminus: Major intrinsically disordered Notch2-binding receptor 1 (897 aa).

Over 1–872 (MDAMPEYSLF…AEFRRAKACK (872 aa)) the chain is Cytoplasmic. Disordered stretches follow at residues 405–433 (AKDKPTASPSGFSKKSNGSKTKDMSSVAC), 450–502 (SINC…EDSE), and 688–766 (TRRS…PPKD). 2 stretches are compositionally biased toward polar residues: residues 411 to 423 (ASPSGFSKKSNGS) and 452 to 471 (NCPSFQSSNVDNGMSVGTQT). The span at 472 to 498 (EQHESRKVKDYPSQNKFKERPPFKHSE) shows a compositional bias: basic and acidic residues. Residues 697–724 (EENSATESKVASITNSPRDWRTVSYSSH) show a composition bias toward polar residues. Over residues 725 to 756 (NGEEGKERDRHSEGKERHRKSREAERQYEAHQ) the composition is skewed to basic and acidic residues. Residues 873 to 893 (IGALIFAAACTVILVIVVPIC) traverse the membrane as a helical segment. Over 894–897 (TMKS) the chain is Extracellular.

This sequence belongs to the MINAR family.

It localises to the cell membrane. Functionally, intrinsically disordered protein which may negatively regulate mTOR signaling pathway by stabilizing the mTOR complex component DEPTOR. Negatively regulates angiogenesis. Negatively regulates cell growth. May play a role in neuronal development. This is Major intrinsically disordered Notch2-binding receptor 1 (minar1) from Danio rerio (Zebrafish).